The chain runs to 106 residues: uncharacterized protein (106 aa).

The interval 1–23 (MASGAPPLTQKTPSHARRKERRR) is disordered. Basic residues predominate over residues 14–23 (SHARRKERRR).

This is an uncharacterized protein from Treponema pallidum (strain Nichols).